The chain runs to 277 residues: Bifunctional protein FolD (277 aa).

Residues 160–162 (GAS), Ser185, and Ile226 each bind NADP(+).

It belongs to the tetrahydrofolate dehydrogenase/cyclohydrolase family. As to quaternary structure, homodimer.

It catalyses the reaction (6R)-5,10-methylene-5,6,7,8-tetrahydrofolate + NADP(+) = (6R)-5,10-methenyltetrahydrofolate + NADPH. The catalysed reaction is (6R)-5,10-methenyltetrahydrofolate + H2O = (6R)-10-formyltetrahydrofolate + H(+). It functions in the pathway one-carbon metabolism; tetrahydrofolate interconversion. Functionally, catalyzes the oxidation of 5,10-methylenetetrahydrofolate to 5,10-methenyltetrahydrofolate and then the hydrolysis of 5,10-methenyltetrahydrofolate to 10-formyltetrahydrofolate. In Vesicomyosocius okutanii subsp. Calyptogena okutanii (strain HA), this protein is Bifunctional protein FolD.